The following is a 311-amino-acid chain: 4-hydroxy-3-methylbut-2-enyl diphosphate reductase (311 aa).

[4Fe-4S] cluster is bound at residue C12. 2 residues coordinate (2E)-4-hydroxy-3-methylbut-2-enyl diphosphate: H41 and H74. Dimethylallyl diphosphate-binding residues include H41 and H74. Residues H41 and H74 each coordinate isopentenyl diphosphate. C96 is a binding site for [4Fe-4S] cluster. H124 is a (2E)-4-hydroxy-3-methylbut-2-enyl diphosphate binding site. H124 is a binding site for dimethylallyl diphosphate. Isopentenyl diphosphate is bound at residue H124. E126 functions as the Proton donor in the catalytic mechanism. T167 is a (2E)-4-hydroxy-3-methylbut-2-enyl diphosphate binding site. C197 contacts [4Fe-4S] cluster. Positions 225, 226, 227, and 269 each coordinate (2E)-4-hydroxy-3-methylbut-2-enyl diphosphate. Dimethylallyl diphosphate is bound by residues S225, S226, N227, and S269. Isopentenyl diphosphate is bound by residues S225, S226, N227, and S269.

It belongs to the IspH family. [4Fe-4S] cluster is required as a cofactor.

It carries out the reaction isopentenyl diphosphate + 2 oxidized [2Fe-2S]-[ferredoxin] + H2O = (2E)-4-hydroxy-3-methylbut-2-enyl diphosphate + 2 reduced [2Fe-2S]-[ferredoxin] + 2 H(+). The enzyme catalyses dimethylallyl diphosphate + 2 oxidized [2Fe-2S]-[ferredoxin] + H2O = (2E)-4-hydroxy-3-methylbut-2-enyl diphosphate + 2 reduced [2Fe-2S]-[ferredoxin] + 2 H(+). It functions in the pathway isoprenoid biosynthesis; dimethylallyl diphosphate biosynthesis; dimethylallyl diphosphate from (2E)-4-hydroxy-3-methylbutenyl diphosphate: step 1/1. The protein operates within isoprenoid biosynthesis; isopentenyl diphosphate biosynthesis via DXP pathway; isopentenyl diphosphate from 1-deoxy-D-xylulose 5-phosphate: step 6/6. Functionally, catalyzes the conversion of 1-hydroxy-2-methyl-2-(E)-butenyl 4-diphosphate (HMBPP) into a mixture of isopentenyl diphosphate (IPP) and dimethylallyl diphosphate (DMAPP). Acts in the terminal step of the DOXP/MEP pathway for isoprenoid precursor biosynthesis. This chain is 4-hydroxy-3-methylbut-2-enyl diphosphate reductase, found in Aeromonas salmonicida (strain A449).